Reading from the N-terminus, the 359-residue chain is MYHQNLISSTPNQNSNPHDWDIQNPLFSIHPSAEIPSKYPFMGITSCPNTNVFEEFQYKITNDQNFPTTYNTPFPVISEGISYNMHDVQENTMCGYTAHNQGLIIGCHEPVLVHAVVESQQFNVPQSEDINLVSQSERVTEDKVMFKTDHKKKDIIGKGQWTPTEDELLVRMVKSKGTKNWTSIAKMFQGRVGKQCRERWHNHLRPNIKKNDWSEEEDQILIEVHKIVGNKWTEIAKRLPGRSENIVKNHWNATKRRLHSVRTKRSDAFSPRNNALENYIRSITINNNALMNREVDSITANSEIDSTRCENIVDEVMNLNLHATTSVYVPEQAVLTWGYDFTKCYEPMDDTWMLMNGWN.

The span at 1-17 shows a compositional bias: polar residues; it reads MYHQNLISSTPNQNSNP. A disordered region spans residues 1-21; sequence MYHQNLISSTPNQNSNPHDWD. HTH myb-type domains are found at residues 153 to 208 and 209 to 259; these read KDII…RPNI and KKND…RRLH. 2 DNA-binding regions (H-T-H motif) span residues 181–204 and 232–255; these read WTSI…HNHL and WTEI…NATK.

Accumulates in reproductive organs (e.g. flowers and siliques). Expressed at very low levels in vegetative organs.

The protein resides in the nucleus. In terms of biological role, transcription activator that recognizes the motif 5'-TAACGG-3' in the promoter of target genes. Promotes vegetative-to-embryonic transition and the formation of somatic embryos from root explants in a WUS-independent manner. Together with MYB118, activates the transcription of S-ACP-DES2/AAD2 and S-ACP-DES3/AAD3 thus promoting the biosynthesis of omega-7 monounsaturated fatty acid in seed endosperm. The chain is Transcription factor MYB115 from Arabidopsis thaliana (Mouse-ear cress).